Consider the following 647-residue polypeptide: Chaperone protein DnaK (647 aa).

At threonine 198 the chain carries Phosphothreonine; by autocatalysis. The disordered stretch occupies residues 606–634 (GASAEGMDPNQFQQGADNAGESNQADDDV). The segment covering 615–628 (NQFQQGADNAGESN) has biased composition (polar residues).

It belongs to the heat shock protein 70 family.

Its function is as follows. Acts as a chaperone. The chain is Chaperone protein DnaK from Psychrobacter cryohalolentis (strain ATCC BAA-1226 / DSM 17306 / VKM B-2378 / K5).